Consider the following 282-residue polypeptide: Pantothenate synthetase (282 aa).

30-37 (MGFLHDGH) provides a ligand contact to ATP. Histidine 37 functions as the Proton donor in the catalytic mechanism. A (R)-pantoate-binding site is contributed by glutamine 60. Residue glutamine 60 coordinates beta-alanine. ATP is bound at residue 146–149 (GQKD). Position 152 (glutamine 152) interacts with (R)-pantoate. ATP is bound by residues isoleucine 175 and 183 to 186 (KSSR).

This sequence belongs to the pantothenate synthetase family. In terms of assembly, homodimer.

The protein localises to the cytoplasm. The catalysed reaction is (R)-pantoate + beta-alanine + ATP = (R)-pantothenate + AMP + diphosphate + H(+). It participates in cofactor biosynthesis; (R)-pantothenate biosynthesis; (R)-pantothenate from (R)-pantoate and beta-alanine: step 1/1. Its function is as follows. Catalyzes the condensation of pantoate with beta-alanine in an ATP-dependent reaction via a pantoyl-adenylate intermediate. The polypeptide is Pantothenate synthetase (Campylobacter jejuni subsp. doylei (strain ATCC BAA-1458 / RM4099 / 269.97)).